We begin with the raw amino-acid sequence, 1355 residues long: Phosphoribosylformylglycinamidine synthase (1355 aa).

Residues 326–337 (GAETGTGGRLRD) and 406–408 (IGF) each bind ATP. Residues Glu-743, Asn-747, and Asp-911 each coordinate Mg(2+). Ser-913 contacts ATP. The 239-residue stretch at 1087–1325 (KVAVIREEGS…LSWQWPFMPE (239 aa)) folds into the Glutamine amidotransferase type-1 domain. Catalysis depends on Cys-1182, which acts as the Nucleophile. Catalysis depends on residues His-1310 and Glu-1312.

It in the N-terminal section; belongs to the FGAMS family.

Its subcellular location is the cytoplasm. It carries out the reaction N(2)-formyl-N(1)-(5-phospho-beta-D-ribosyl)glycinamide + L-glutamine + ATP + H2O = 2-formamido-N(1)-(5-O-phospho-beta-D-ribosyl)acetamidine + L-glutamate + ADP + phosphate + H(+). It functions in the pathway purine metabolism; IMP biosynthesis via de novo pathway; 5-amino-1-(5-phospho-D-ribosyl)imidazole from N(2)-formyl-N(1)-(5-phospho-D-ribosyl)glycinamide: step 1/2. Its function is as follows. Phosphoribosylformylglycinamidine synthase involved in the purines biosynthetic pathway. Catalyzes the ATP-dependent conversion of formylglycinamide ribonucleotide (FGAR) and glutamine to yield formylglycinamidine ribonucleotide (FGAM) and glutamate. In Dictyostelium discoideum (Social amoeba), this protein is Phosphoribosylformylglycinamidine synthase (purL).